A 96-amino-acid chain; its full sequence is Phosphoribosyl-ATP pyrophosphatase (96 aa).

This sequence belongs to the PRA-PH family.

It localises to the cytoplasm. It carries out the reaction 1-(5-phospho-beta-D-ribosyl)-ATP + H2O = 1-(5-phospho-beta-D-ribosyl)-5'-AMP + diphosphate + H(+). It functions in the pathway amino-acid biosynthesis; L-histidine biosynthesis; L-histidine from 5-phospho-alpha-D-ribose 1-diphosphate: step 2/9. This chain is Phosphoribosyl-ATP pyrophosphatase, found in Methanococcus maripaludis (strain C6 / ATCC BAA-1332).